We begin with the raw amino-acid sequence, 534 residues long: Glycolytic genes transcriptional activator GCR2 (534 aa).

Residues 29–122 (LQSVTNSPQT…TGNNASSSAT (94 aa)) form a disordered region. Low complexity predominate over residues 30–43 (QSVTNSPQTTTNTP). Residues 64–88 (SDSTPNIDEIITSTGSNALTKTNSD) show a composition bias toward polar residues. Residues 89 to 122 (SANGTPNGNSSSTSAISNASNPATTGNNASSSAT) show a composition bias toward low complexity. Ser-151 bears the Phosphoserine mark. The tract at residues 230–333 (LTQGRRKGNS…SNPGTNMLFD (104 aa)) is disordered. Over residues 238 to 252 (NSLNTSTKGSPSDLQ) the composition is skewed to polar residues. The segment covering 253 to 279 (GINNGNNNGNNGNIGNGSNIKNYGNKN) has biased composition (low complexity). Residues 281–288 (PNNRTKKR) carry the Nuclear localization signal motif. The segment covering 295–304 (NAKNGKNNKN) has biased composition (low complexity). Positions 312–328 (ITDTSAFSNTTISNPGT) are enriched in polar residues. Phosphoserine is present on residues Ser-406 and Ser-409. The interval 497–534 (IVQLERELELQRQETQWLRKMLIEDMGCVRSMLRDLQR) is leucine-zipper.

As to quaternary structure, homodimer via the leucine-zipper domain. Forms a complex with a GCR1 homodimer.

The protein resides in the nucleus. Its function is as follows. Transcriptional activator required for the expression of glycolytic genes. Enhances the CT box-dependent transcriptional activation of a RAP1-GCR1 complex. Required for GCR1 phosphorylation. In Saccharomyces cerevisiae (strain ATCC 204508 / S288c) (Baker's yeast), this protein is Glycolytic genes transcriptional activator GCR2 (GCR2).